The chain runs to 199 residues: NAD(P)H dehydrogenase (quinone) (199 aa).

The 187-residue stretch at 4–190 folds into the Flavodoxin-like domain; it reads ILVLYYSMYG…KIARYQGEHV (187 aa). Residues 10–15 and 79–81 contribute to the FMN site; these read SMYGHI and TRF. NAD(+) is bound at residue Tyr12. Trp99 is a substrate binding site. Residue His134 participates in FMN binding.

The protein belongs to the WrbA family. FMN serves as cofactor.

It carries out the reaction a quinone + NADH + H(+) = a quinol + NAD(+). The catalysed reaction is a quinone + NADPH + H(+) = a quinol + NADP(+). In Photorhabdus laumondii subsp. laumondii (strain DSM 15139 / CIP 105565 / TT01) (Photorhabdus luminescens subsp. laumondii), this protein is NAD(P)H dehydrogenase (quinone).